Reading from the N-terminus, the 189-residue chain is DnaJ homolog subfamily C member 5G (189 aa).

A J domain is found at 17-98 (SLYAVLDLKK…KKRKIYDQHG (82 aa)). The tract at residues 154-189 (PEQDSGRKYQQNVQSQPPRSGAKCDFRSEENSEDDF) is disordered. Polar residues predominate over residues 161–171 (KYQQNVQSQPP).

Palmitoylated. Testis specific.

It is found in the membrane. The polypeptide is DnaJ homolog subfamily C member 5G (DNAJC5G) (Homo sapiens (Human)).